The following is a 425-amino-acid chain: Monoacylglycerol lipase ABHD2 (425 aa).

Topologically, residues 1–9 (MNAMLETPE) are cytoplasmic. A helical; Signal-anchor for type II membrane protein transmembrane segment spans residues 10–30 (LPAVFDGVKLAAVAAVLYVIV). Residues 31–425 (RCLNLKSPTA…DTEQVEADLE (395 aa)) are Extracellular-facing. An AB hydrolase-1 domain is found at 128–382 (MVICPGIANH…HGGHLGFFEG (255 aa)). N136 is a glycosylation site (N-linked (GlcNAc...) asparagine). The active-site Nucleophile is the S207. Catalysis depends on charge relay system residues D345 and H376. A glycan (N-linked (GlcNAc...) asparagine) is linked at N410.

This sequence belongs to the AB hydrolase superfamily. AB hydrolase 4 family.

It is found in the cell membrane. The catalysed reaction is Hydrolyzes glycerol monoesters of long-chain fatty acids.. The enzyme catalyses an acetyl ester + H2O = an aliphatic alcohol + acetate + H(+). It carries out the reaction a triacylglycerol + H2O = a diacylglycerol + a fatty acid + H(+). It catalyses the reaction 2-(5Z,8Z,11Z,14Z-eicosatetraenoyl)-glycerol + H2O = glycerol + (5Z,8Z,11Z,14Z)-eicosatetraenoate + H(+). The catalysed reaction is a butanoate ester + H2O = an aliphatic alcohol + butanoate + H(+). The enzyme catalyses hexadecanoate ester + H2O = an aliphatic alcohol + hexadecanoate + H(+). Acylglycerol lipase activity is activated upon binding to progesterone. Functionally, progesterone-dependent acylglycerol lipase that catalyzes hydrolysis of endocannabinoid arachidonoylglycerol (AG) from cell membrane. Acts as a progesterone receptor: progesterone-binding activates the acylglycerol lipase activity, mediating degradation of 1-arachidonoylglycerol (1AG) and 2-arachidonoylglycerol (2AG) to glycerol and arachidonic acid (AA). Also displays an ester hydrolase activity against acetyl ester, butanoate ester and hexadecanoate ester. Plays a key role in sperm capacitation in response to progesterone by mediating degradation of 2AG, an inhibitor of the sperm calcium channel CatSper, leading to calcium influx via CatSper and sperm activation. May also play a role in smooth muscle cells migration. The protein is Monoacylglycerol lipase ABHD2 (ABHD2) of Macaca fascicularis (Crab-eating macaque).